We begin with the raw amino-acid sequence, 251 residues long: Triosephosphate isomerase (251 aa).

Residue 9-11 (NWK) coordinates substrate. The Electrophile role is filled by His-95. Residue Glu-167 is the Proton acceptor of the active site. Residues Gly-173, Ser-213, and 234–235 (GG) each bind substrate.

The protein belongs to the triosephosphate isomerase family. As to quaternary structure, homodimer.

It localises to the cytoplasm. It carries out the reaction D-glyceraldehyde 3-phosphate = dihydroxyacetone phosphate. Its pathway is carbohydrate biosynthesis; gluconeogenesis. The protein operates within carbohydrate degradation; glycolysis; D-glyceraldehyde 3-phosphate from glycerone phosphate: step 1/1. Its function is as follows. Involved in the gluconeogenesis. Catalyzes stereospecifically the conversion of dihydroxyacetone phosphate (DHAP) to D-glyceraldehyde-3-phosphate (G3P). In Citrifermentans bemidjiense (strain ATCC BAA-1014 / DSM 16622 / JCM 12645 / Bem) (Geobacter bemidjiensis), this protein is Triosephosphate isomerase.